Here is a 246-residue protein sequence, read N- to C-terminus: Probable transcriptional regulatory protein WRi_002620 (246 aa).

Residues 1-22 are disordered; it reads MAGHSQFSNIKHRKGAQDAKRS.

This sequence belongs to the TACO1 family.

The protein localises to the cytoplasm. The chain is Probable transcriptional regulatory protein WRi_002620 from Wolbachia sp. subsp. Drosophila simulans (strain wRi).